The chain runs to 364 residues: Developmentally-regulated GTP-binding protein 2 (364 aa).

Residue Lys-21 is modified to (3S)-3-hydroxylysine. The OBG-type G domain maps to 63–288 (ARVALIGFPS…LLEMLWEYLA (226 aa)). Residues 69–76 (GFPSVGKS), 94–98 (FTTLT), 115–118 (DLPG), 246–249 (NKID), and 269–271 (SCG) each bind GTP. Positions 76 and 96 each coordinate Mg(2+). The TGS domain maps to 288-363 (ALTCIYTKKR…EHEDVIQIVK (76 aa)).

It belongs to the TRAFAC class OBG-HflX-like GTPase superfamily. OBG GTPase family. In terms of assembly, interacts with RWDD1; this interaction confers protection to polyubiquitination and proteolytic degradation. Interacts with JMJD7; this interaction is direct. It depends on Mg(2+) as a cofactor. Post-translationally, polyubiquitinated. In terms of processing, hydroxylated (with S stereochemistry) at C-3 of Lys-21 by JMJD7.

It localises to the nucleus. The protein localises to the cytoplasm. The enzyme catalyses GTP + H2O = GDP + phosphate + H(+). In terms of biological role, catalyzes the conversion of GTP to GDP through hydrolysis of the gamma-phosphate bond in GTP. When hydroxylated at C-3 of 'Lys-21' by JMJD7, may bind to RNA and play a role in translation. This chain is Developmentally-regulated GTP-binding protein 2 (DRG2), found in Bos taurus (Bovine).